The primary structure comprises 264 residues: Apolipoprotein A-I (264 aa).

Residues 1 to 18 (MKAVVLAVALVFLTGSQA) form the signal peptide. Repeat copies occupy residues 67–88 (LNLL…ERLG) and 89–110 (PLTR…QEMN). The tract at residues 67 to 264 (LNLLENWDTL…DKASETLTAQ (198 aa)) is 10 X approximate tandem repeats. A Methionine sulfoxide modification is found at methionine 109. Residues 111–121 (KDLEEVKQKVQ) form a 3; half-length repeat. Tandem repeats lie at residues 122–143 (PYLD…QKVA), 144–165 (PLGA…GRLS), and 166–187 (PVAE…TQLA). A 7; truncated repeat occupies 188-207 (PHSEQMRESLAQRLAELKSN). A Methionine sulfoxide modification is found at methionine 193. Residues 208–229 (PTLNEYHTRAKTHLKTLGEKAR) form repeat 8. The stretch at 230 to 240 (PALEDLRHSLM) is one 9; half-length repeat. A methionine sulfoxide mark is found at methionine 240 and methionine 242. Copy 10 of the repeat occupies 241–264 (PMLETLKTQVQSVIDKASETLTAQ).

Belongs to the apolipoprotein A1/A4/E family. As to quaternary structure, homodimer. Interacts with APOA1BP and CLU. Component of a sperm activating protein complex (SPAP), consisting of APOA1, an immunoglobulin heavy chain, an immunoglobulin light chain and albumin. Interacts with NDRG1. Interacts with SCGB3A2. Interacts with NAXE and YJEFN3. In terms of processing, glycosylated. Post-translationally, palmitoylated. May be acylated. In terms of processing, phosphorylation sites are present in the extracellular medium. As to expression, major protein of plasma HDL, also found in chylomicrons.

Its subcellular location is the secreted. Its function is as follows. Participates in the reverse transport of cholesterol from tissues to the liver for excretion by promoting cholesterol efflux from tissues and by acting as a cofactor for the lecithin cholesterol acyltransferase (LCAT). As part of the SPAP complex, activates spermatozoa motility. The polypeptide is Apolipoprotein A-I (Apoa1) (Mus musculus (Mouse)).